The chain runs to 162 residues: Transcription elongation factor GreA (162 aa).

A coiled-coil region spans residues 48–76 (NSEYQSAKDEQAFVEGRVKQLQQMIQFAQ). Residues 111 to 132 (GSAESDPLSGKISNDSPMGKAL) are disordered.

It belongs to the GreA/GreB family.

In terms of biological role, necessary for efficient RNA polymerase transcription elongation past template-encoded arresting sites. The arresting sites in DNA have the property of trapping a certain fraction of elongating RNA polymerases that pass through, resulting in locked ternary complexes. Cleavage of the nascent transcript by cleavage factors such as GreA or GreB allows the resumption of elongation from the new 3'terminus. GreA releases sequences of 2 to 3 nucleotides. The sequence is that of Transcription elongation factor GreA from Oenococcus oeni (strain ATCC BAA-331 / PSU-1).